A 321-amino-acid chain; its full sequence is Olfactory receptor 3A3 (321 aa).

Residues 1 to 34 are Extracellular-facing; the sequence is MSLQKLMEPEAGTNRTAVAEFILLGLVQTEEMQP. N-linked (GlcNAc...) asparagine glycosylation is present at Asn-14. A helical membrane pass occupies residues 35-58; it reads VVFVLLLFAYLVTTGGNLSILAAV. The Cytoplasmic portion of the chain corresponds to 59-66; the sequence is LVEPKLHA. A helical membrane pass occupies residues 67–88; that stretch reads PMYFFLGNLSVLDVGCITVTVP. Residues 89–109 are Extracellular-facing; the sequence is AMLGRLLSHKSTISYDACLSQ. A disulfide bridge connects residues Cys-106 and Cys-198. Residues 110–129 form a helical membrane-spanning segment; it reads LFFFHLLAGMDCFLLTAMAY. The Cytoplasmic portion of the chain corresponds to 130-149; it reads DRLLAICQPLTYSTRMSQTV. A helical transmembrane segment spans residues 150-167; it reads QRMLVAASWACAFTNALT. The Extracellular portion of the chain corresponds to 168–205; the sequence is HTVAMSTLNFCGPNEVNHFYCDLPQLFQLSCSSTQLNE. The chain crosses the membrane as a helical span at residues 206–228; it reads LLLFVAAAFMAVAPLVFISVSYA. Topologically, residues 229–245 are cytoplasmic; sequence HVVAAVLQIRSAEGRKK. A helical membrane pass occupies residues 246 to 268; it reads AFSTCGSHLTVVGIFYGTGVFSY. Topologically, residues 269–281 are extracellular; the sequence is MRLGSVESSDKDK. The chain crosses the membrane as a helical span at residues 282–301; the sequence is GVGVFMTVINPMLNPLIYSL. Topologically, residues 302 to 321 are cytoplasmic; it reads RNTDVQGALCQLLVGKRSLT.

It belongs to the G-protein coupled receptor 1 family.

It localises to the cell membrane. Odorant receptor. This Homo sapiens (Human) protein is Olfactory receptor 3A3 (OR3A3).